The primary structure comprises 568 residues: MSSSSIEDIKGKSHRLRGSLLESLANPTTGALRESDQTLIKYHGSYQQDDRDLREERRRQKLEPAYQFMIRTRTPGGVITPQQWLQLDAIATRYANHSLRVTTRQAFQFHGVIKRELKTTMQAINAALIDTLAACGDVNRNVQVAANPLISRAHADLYTDAAHLSEHLLPNTRAYYEIWLDEKKVAGAGEEEEPIYGPHYLPRKFKIGFAAPPINDVDVFANDLGFIAVIVDKTLLGYNVTIGGGMGTTHGDPDTWPRIGNIIGFITRADLITISTAIVTTQRDFGNRTLRKRARFKYTIDDRGLDCIVGEIQQRAGITLQPARPFVFEHNGDRYGWIEGEDGHWHLTLLLPAGRIADTEGSTLLSGFREIAQLGIGEFRMTPNQNVVIAGISPGQRAAIDALVTQYGLDTGNRAPTALARHAMACVALPTCGLAMAEAERYLPDFNAKLQPILEKYGLAETPILLRISGCPNGCSRPYLAEIALVGKAPGRYNLMLGGDQRGQRLNTLYRENITETEILAALEPLLGRYQQKRLPSEGFGDFLHRTGIIALPPYPTHRHVISSTLQA.

The [4Fe-4S] cluster site is built by C426, C432, C471, and C475. C475 is a binding site for siroheme.

Belongs to the nitrite and sulfite reductase 4Fe-4S domain family. In terms of assembly, alpha(8)-beta(8). The alpha component is a flavoprotein, the beta component is a hemoprotein. It depends on siroheme as a cofactor. [4Fe-4S] cluster serves as cofactor.

It carries out the reaction hydrogen sulfide + 3 NADP(+) + 3 H2O = sulfite + 3 NADPH + 4 H(+). It participates in sulfur metabolism; hydrogen sulfide biosynthesis; hydrogen sulfide from sulfite (NADPH route): step 1/1. Its function is as follows. Component of the sulfite reductase complex that catalyzes the 6-electron reduction of sulfite to sulfide. This is one of several activities required for the biosynthesis of L-cysteine from sulfate. In Xylella fastidiosa (strain M12), this protein is Sulfite reductase [NADPH] hemoprotein beta-component.